The following is a 396-amino-acid chain: Gap junction gamma-1 protein (396 aa).

The Cytoplasmic segment spans residues 1-22; the sequence is MSWSFLTRLLEEIHNHSTFVGK. The helical transmembrane segment at 23-45 threads the bilayer; that stretch reads IWLTVLIAFRIALTAVGGESIYY. Residues 46–75 are Extracellular-facing; that stretch reads DEQSKFVCNTEQPGCENVCYDAFAPLSHVR. The chain crosses the membrane as a helical span at residues 76 to 95; the sequence is FWVFQIILVATPSVMYLGYA. Residues 96-175 are Cytoplasmic-facing; that stretch reads IHKIAKMEHG…RRIREDGLMK (80 aa). The disordered stretch occupies residues 145 to 165; the sequence is ELESEKENKEQNQPKPKHDGR. Residues 147–156 show a composition bias toward basic and acidic residues; it reads ESEKENKEQN. The helical transmembrane segment at 176–198 threads the bilayer; that stretch reads IYVLQLLARTVFEVGFLIGQYFL. At 199 to 228 the chain is on the extracellular side; the sequence is YGFQVHPFYVCSRLPCPHKIDCFISRPTEK. A helical transmembrane segment spans residues 229–248; the sequence is TIFLLIMYGVTGLCLLLNIW. The Cytoplasmic segment spans residues 249 to 396; the sequence is EMLHLGFGTI…SGDGKNSVWI (148 aa). The tract at residues 355-396 is disordered; that stretch reads AYSHQNNPHGPREKKAKVGSKAGSNKSSASSKSGDGKNSVWI. Residues 373–396 are compositionally biased toward low complexity; the sequence is GSKAGSNKSSASSKSGDGKNSVWI.

Belongs to the connexin family. Gamma-type subfamily. A connexon is composed of a hexamer of connexins. Interacts with CNST.

It localises to the cell membrane. The protein resides in the cell junction. It is found in the gap junction. In terms of biological role, one gap junction consists of a cluster of closely packed pairs of transmembrane channels, the connexons, through which materials of low MW diffuse from one cell to a neighboring cell. This Canis lupus familiaris (Dog) protein is Gap junction gamma-1 protein (GJC1).